The following is a 438-amino-acid chain: High-affinity gluconate transporter (438 aa).

A run of 13 helical transmembrane segments spans residues 2–22 (PLVI…RFKM), 23–43 (NGFI…GMPL), 52–72 (AGVG…AMLG), 108–128 (VGFA…VFTI), 134–154 (IPLL…HGFL), 174–194 (TLLY…PVYA), 222–242 (FGVS…RAIA), 258–278 (FLGD…FTFG), 292–312 (LVSS…GGAF), 327–347 (SMMH…AAVL), 349–369 (IALG…APLI), 370–390 (ATTG…SVIF), and 418–438 (MLET…NMVI).

It belongs to the GntP permease family.

The protein resides in the cell inner membrane. The protein operates within carbohydrate acid metabolism; D-gluconate degradation. In terms of biological role, part of the gluconate utilization system Gnt-I; high-affinity intake of gluconate. The protein is High-affinity gluconate transporter (gntT) of Escherichia coli (strain K12).